Here is a 398-residue protein sequence, read N- to C-terminus: tRNA(Ile)-lysidine synthase (398 aa).

25 to 30 (SGGVDS) lines the ATP pocket.

The protein belongs to the tRNA(Ile)-lysidine synthase family.

It localises to the cytoplasm. It carries out the reaction cytidine(34) in tRNA(Ile2) + L-lysine + ATP = lysidine(34) in tRNA(Ile2) + AMP + diphosphate + H(+). Functionally, ligates lysine onto the cytidine present at position 34 of the AUA codon-specific tRNA(Ile) that contains the anticodon CAU, in an ATP-dependent manner. Cytidine is converted to lysidine, thus changing the amino acid specificity of the tRNA from methionine to isoleucine. The polypeptide is tRNA(Ile)-lysidine synthase (Francisella tularensis subsp. novicida (strain U112)).